The chain runs to 142 residues: Large ribosomal subunit protein bL19 (142 aa).

Belongs to the bacterial ribosomal protein bL19 family.

In terms of biological role, this protein is located at the 30S-50S ribosomal subunit interface and may play a role in the structure and function of the aminoacyl-tRNA binding site. This is Large ribosomal subunit protein bL19 from Psychrobacter cryohalolentis (strain ATCC BAA-1226 / DSM 17306 / VKM B-2378 / K5).